Consider the following 108-residue polypeptide: uncharacterized protein (108 aa).

The next 3 helical transmembrane spans lie at 36–56 (LAIMFITFVFLLQVNGTDKMI), 58–78 (FIFVFTGTVIGVTYSVCKLLF), and 88–108 (IVFLIIFVCLFVWGIITFFNL).

It localises to the cell membrane. This is an uncharacterized protein from Alkalihalophilus pseudofirmus (strain ATCC BAA-2126 / JCM 17055 / OF4) (Bacillus pseudofirmus).